Here is a 437-residue protein sequence, read N- to C-terminus: FK506-binding protein 3 (437 aa).

3 stretches are compositionally biased toward acidic residues: residues 73 to 90 (DIEA…EEEE), 106 to 131 (EEEE…EDVS), and 179 to 220 (ADED…DASD). 2 disordered regions span residues 73–132 (DIEA…DVSE) and 169–349 (HLTG…QTAK). 2 stretches are compositionally biased toward basic and acidic residues: residues 256-270 (KKED…KDLE) and 292-324 (AKKE…EASK). Residues 351–437 (GNKVGIRYIG…TFDIKLVSIK (87 aa)) form the PPIase FKBP-type domain.

Belongs to the FKBP-type PPIase family. FKBP3/4 subfamily.

Its subcellular location is the nucleus. The protein localises to the nucleolus. The catalysed reaction is [protein]-peptidylproline (omega=180) = [protein]-peptidylproline (omega=0). Inhibited by both FK506 and rapamycin. PPIases accelerate the folding of proteins. It catalyzes the cis-trans isomerization of proline imidic peptide bonds in oligopeptides. In Debaryomyces hansenii (strain ATCC 36239 / CBS 767 / BCRC 21394 / JCM 1990 / NBRC 0083 / IGC 2968) (Yeast), this protein is FK506-binding protein 3 (FPR3).